Consider the following 154-residue polypeptide: Snaclec lebecin subunit beta (154 aa).

The signal sequence occupies residues 1–23; it reads MGRIIFVSFGLLVVFLSLSGTGA. 3 disulfide bridges follow: Cys25/Cys36, Cys53/Cys150, and Cys125/Cys142. Residues 32 to 151 form the C-type lectin domain; it reads DEEHCYYVFF…CGDDYPFVCK (120 aa). Asn139 is a glycosylation site (N-linked (GlcNAc...) asparagine).

In terms of assembly, heterodimer with the alpha subunit (AC W5XDM0); disulfide-linked. In terms of tissue distribution, expressed by the venom gland.

The protein localises to the secreted. Inhibits human breast cancer cells (MDA-MB231) migration and proliferation, as well as their adhesion to fibrinogen and fibronectin. This inhibition may be due to the binding to receptors of the integrin family, probably alpha-v/beta-3 (ITGAV/ITGB3) (40% inhibition of cell adhesion) and alpha-5/beta-1 (ITGA5/ITGB1) (by comparison with lebectin). This chain is Snaclec lebecin subunit beta, found in Macrovipera lebetinus (Levantine viper).